Reading from the N-terminus, the 266-residue chain is Signal peptidase I (266 aa).

At 1–20 the chain is on the cytoplasmic side; it reads MQTDNTKSNTNKTAKQEWGS. Residues 21-41 traverse the membrane as a helical segment; it reads FAFVICIALLIRILIMEPFTV. Topologically, residues 42 to 266 are periplasmic; it reads PTGSMKATIL…IFRNLYNTDA (225 aa). Residues Ser-45 and Lys-108 contribute to the active site.

The protein belongs to the peptidase S26 family.

The protein resides in the cell inner membrane. The catalysed reaction is Cleavage of hydrophobic, N-terminal signal or leader sequences from secreted and periplasmic proteins.. Functionally, complements E.coli mutants temperature-sensitive for LepB function. The chain is Signal peptidase I (lepB) from Rickettsia rickettsii (strain Sheila Smith).